Reading from the N-terminus, the 697-residue chain is Protein arginine N-methyltransferase 7 (697 aa).

2 consecutive SAM-dependent MTase PRMT-type domains span residues 14–357 (QNTW…YSLW) and 366–697 (EQPA…EETK).

Belongs to the class I-like SAM-binding methyltransferase superfamily. Protein arginine N-methyltransferase family. PRMT7 subfamily.

Its function is as follows. Essential arginine methyltransferase that can both catalyze the formation of omega-N monomethylarginine (MMA) and symmetrical dimethylarginine (sDMA). Specifically mediates the symmetrical dimethylation of arginine residues in the small nuclear ribonucleoproteins SmD1 and SmD3. The chain is Protein arginine N-methyltransferase 7 (Art7) from Drosophila virilis (Fruit fly).